Consider the following 550-residue polypeptide: CTP synthase (550 aa).

The interval 1–270 (MTKFVFVTGG…DRLICEELRL (270 aa)) is amidoligase domain. Ser13 lines the CTP pocket. Ser13 contacts UTP. Residues 14–19 (SLGKGI) and Asp71 each bind ATP. Mg(2+) contacts are provided by Asp71 and Glu144. CTP is bound by residues 151-153 (DIE), 191-196 (KTKPTQ), and Lys227. Residues 191–196 (KTKPTQ) and Lys227 each bind UTP. A Glutamine amidotransferase type-1 domain is found at 295 to 547 (TIGMVGKYVD…VEAALASQQR (253 aa)). Residue Gly356 participates in L-glutamine binding. Cys383 acts as the Nucleophile; for glutamine hydrolysis in catalysis. L-glutamine is bound by residues 384–387 (LGMQ), Glu407, and Arg473. Residues His520 and Glu522 contribute to the active site.

It belongs to the CTP synthase family. As to quaternary structure, homotetramer.

It carries out the reaction UTP + L-glutamine + ATP + H2O = CTP + L-glutamate + ADP + phosphate + 2 H(+). The catalysed reaction is L-glutamine + H2O = L-glutamate + NH4(+). It catalyses the reaction UTP + NH4(+) + ATP = CTP + ADP + phosphate + 2 H(+). It participates in pyrimidine metabolism; CTP biosynthesis via de novo pathway; CTP from UDP: step 2/2. Its activity is regulated as follows. Allosterically activated by GTP, when glutamine is the substrate; GTP has no effect on the reaction when ammonia is the substrate. The allosteric effector GTP functions by stabilizing the protein conformation that binds the tetrahedral intermediate(s) formed during glutamine hydrolysis. Inhibited by the product CTP, via allosteric rather than competitive inhibition. Catalyzes the ATP-dependent amination of UTP to CTP with either L-glutamine or ammonia as the source of nitrogen. Regulates intracellular CTP levels through interactions with the four ribonucleotide triphosphates. The polypeptide is CTP synthase (Cupriavidus taiwanensis (strain DSM 17343 / BCRC 17206 / CCUG 44338 / CIP 107171 / LMG 19424 / R1) (Ralstonia taiwanensis (strain LMG 19424))).